A 453-amino-acid polypeptide reads, in one-letter code: Bifunctional protein GlmU (453 aa).

Positions 1-225 (MNIVILAAGT…EWETLGVNSK (225 aa)) are pyrophosphorylase. UDP-N-acetyl-alpha-D-glucosamine is bound by residues 6 to 9 (LAAG), lysine 20, glutamine 71, 76 to 77 (GT), 98 to 100 (YGD), glycine 135, glutamate 150, asparagine 165, and asparagine 223. Position 100 (aspartate 100) interacts with Mg(2+). Asparagine 223 serves as a coordination point for Mg(2+). The linker stretch occupies residues 226–246 (AQLAELERIHQRKLAEALLAD). Positions 247–453 (GVTLADPARI…GYVRPVKKKS (207 aa)) are N-acetyltransferase. UDP-N-acetyl-alpha-D-glucosamine is bound by residues arginine 329 and lysine 347. Histidine 359 (proton acceptor) is an active-site residue. UDP-N-acetyl-alpha-D-glucosamine is bound by residues tyrosine 362 and asparagine 373. Acetyl-CoA is bound by residues alanine 376, 382–383 (NY), serine 401, and alanine 419.

It in the N-terminal section; belongs to the N-acetylglucosamine-1-phosphate uridyltransferase family. The protein in the C-terminal section; belongs to the transferase hexapeptide repeat family. As to quaternary structure, homotrimer. Mg(2+) serves as cofactor.

Its subcellular location is the cytoplasm. The catalysed reaction is alpha-D-glucosamine 1-phosphate + acetyl-CoA = N-acetyl-alpha-D-glucosamine 1-phosphate + CoA + H(+). It carries out the reaction N-acetyl-alpha-D-glucosamine 1-phosphate + UTP + H(+) = UDP-N-acetyl-alpha-D-glucosamine + diphosphate. It functions in the pathway nucleotide-sugar biosynthesis; UDP-N-acetyl-alpha-D-glucosamine biosynthesis; N-acetyl-alpha-D-glucosamine 1-phosphate from alpha-D-glucosamine 6-phosphate (route II): step 2/2. It participates in nucleotide-sugar biosynthesis; UDP-N-acetyl-alpha-D-glucosamine biosynthesis; UDP-N-acetyl-alpha-D-glucosamine from N-acetyl-alpha-D-glucosamine 1-phosphate: step 1/1. The protein operates within bacterial outer membrane biogenesis; LPS lipid A biosynthesis. Functionally, catalyzes the last two sequential reactions in the de novo biosynthetic pathway for UDP-N-acetylglucosamine (UDP-GlcNAc). The C-terminal domain catalyzes the transfer of acetyl group from acetyl coenzyme A to glucosamine-1-phosphate (GlcN-1-P) to produce N-acetylglucosamine-1-phosphate (GlcNAc-1-P), which is converted into UDP-GlcNAc by the transfer of uridine 5-monophosphate (from uridine 5-triphosphate), a reaction catalyzed by the N-terminal domain. This chain is Bifunctional protein GlmU, found in Burkholderia thailandensis (strain ATCC 700388 / DSM 13276 / CCUG 48851 / CIP 106301 / E264).